Consider the following 297-residue polypeptide: Acetylglutamate kinase (297 aa).

Substrate contacts are provided by residues 68 to 69, R90, and N195; that span reads GG.

This sequence belongs to the acetylglutamate kinase family. ArgB subfamily.

Its subcellular location is the cytoplasm. The enzyme catalyses N-acetyl-L-glutamate + ATP = N-acetyl-L-glutamyl 5-phosphate + ADP. Its pathway is amino-acid biosynthesis; L-arginine biosynthesis; N(2)-acetyl-L-ornithine from L-glutamate: step 2/4. Functionally, catalyzes the ATP-dependent phosphorylation of N-acetyl-L-glutamate. The sequence is that of Acetylglutamate kinase from Chelativorans sp. (strain BNC1).